The sequence spans 424 residues: Tyrosine--tRNA ligase (424 aa).

Residue Tyr37 coordinates L-tyrosine. Positions 42 to 51 (PTADSLHLGH) match the 'HIGH' region motif. Lys144 bears the N6-acetyllysine mark. L-tyrosine-binding residues include Tyr175 and Gln179. The 'KMSKS' region motif lies at 235-239 (KFGKT). Lys238 is an ATP binding site. The region spanning 357-414 (ADLMQALVDSELQPSRGQARKTIASNAITINGEKQSDPEYFFKEEDRLFGRFTLLRRG) is the S4 RNA-binding domain.

It belongs to the class-I aminoacyl-tRNA synthetase family. TyrS type 1 subfamily. In terms of assembly, homodimer.

It is found in the cytoplasm. The enzyme catalyses tRNA(Tyr) + L-tyrosine + ATP = L-tyrosyl-tRNA(Tyr) + AMP + diphosphate + H(+). Catalyzes the attachment of tyrosine to tRNA(Tyr) in a two-step reaction: tyrosine is first activated by ATP to form Tyr-AMP and then transferred to the acceptor end of tRNA(Tyr). This chain is Tyrosine--tRNA ligase, found in Escherichia coli O8 (strain IAI1).